The primary structure comprises 201 residues: Holliday junction branch migration complex subunit RuvA (201 aa).

The segment at Met1–Ile63 is domain I. The domain II stretch occupies residues Asp64 to Ser142. The interval Thr143 to Ser152 is flexible linker. Positions Ser152–Lys201 are domain III.

It belongs to the RuvA family. As to quaternary structure, homotetramer. Forms an RuvA(8)-RuvB(12)-Holliday junction (HJ) complex. HJ DNA is sandwiched between 2 RuvA tetramers; dsDNA enters through RuvA and exits via RuvB. An RuvB hexamer assembles on each DNA strand where it exits the tetramer. Each RuvB hexamer is contacted by two RuvA subunits (via domain III) on 2 adjacent RuvB subunits; this complex drives branch migration. In the full resolvosome a probable DNA-RuvA(4)-RuvB(12)-RuvC(2) complex forms which resolves the HJ.

Its subcellular location is the cytoplasm. The RuvA-RuvB-RuvC complex processes Holliday junction (HJ) DNA during genetic recombination and DNA repair, while the RuvA-RuvB complex plays an important role in the rescue of blocked DNA replication forks via replication fork reversal (RFR). RuvA specifically binds to HJ cruciform DNA, conferring on it an open structure. The RuvB hexamer acts as an ATP-dependent pump, pulling dsDNA into and through the RuvAB complex. HJ branch migration allows RuvC to scan DNA until it finds its consensus sequence, where it cleaves and resolves the cruciform DNA. This is Holliday junction branch migration complex subunit RuvA from Acinetobacter baylyi (strain ATCC 33305 / BD413 / ADP1).